We begin with the raw amino-acid sequence, 506 residues long: Ecdysteroid UDP-glucosyltransferase (506 aa).

A signal peptide spans 1-18 (MTILCWLALLSTLTAVNA).

This sequence belongs to the UDP-glycosyltransferase family. In terms of processing, glycosylated.

Catalyzes the transfer of glucose from UDP-glucose to ecdysteroids which are insect molting hormones. Acts on the host at the organismal level to block its development, thereby increasing the yield of progeny virus. The protein is Ecdysteroid UDP-glucosyltransferase (EGT) of Lepidoptera (butterflies and moths).